A 410-amino-acid polypeptide reads, in one-letter code: Angiopoietin-related protein 4 (410 aa).

Positions 1–23 (MRCAPTAGAALMLCAATAGLLSA) are cleaved as a signal peptide. Residues 81 to 106 (KDPEGSAAPPRAQANLVNPGGGDASP) are disordered. The stretch at 107-155 (ETLRSLKTQLEAQNSRIQQLFQKVAQQQRHLEKQQLRIQNLQSQMDHLA) forms a coiled coil. Asn-184 carries an N-linked (GlcNAc...) asparagine glycan. The Fibrinogen C-terminal domain maps to 186–408 (SRLHRLPRDC…ATTILVQPTA (223 aa)). 2 cysteine pairs are disulfide-bonded: Cys-195/Cys-223 and Cys-348/Cys-361.

As to quaternary structure, homooligomer; disulfide-linked via Cys residues in the N-terminal part of the protein. The homooligomer undergoes proteolytic processing to release the ANGPTL4 C-terminal chain, which circulates as a monomer. The homooligomer unprocessed form is able to interact with the extracellular matrix. In terms of processing, N-glycosylated. Forms disulfide-linked dimers and tetramers. Post-translationally, cleaved into a smaller N-terminal chain and a larger chain that contains the fibrinogen C-terminal domain; both cleaved and uncleaved forms are detected in the extracellular space. The cleaved form is not present within the cell.

It localises to the secreted. The protein localises to the extracellular space. Its subcellular location is the extracellular matrix. Mediates inactivation of the lipoprotein lipase LPL, and thereby plays a role in the regulation of triglyceride clearance from the blood serum and in lipid metabolism. May also play a role in regulating glucose homeostasis and insulin sensitivity. Inhibits proliferation, migration, and tubule formation of endothelial cells and reduces vascular leakage. Upon heterologous expression, inhibits the adhesion of endothelial cell to the extracellular matrix (ECM), and inhibits the reorganization of the actin cytoskeleton, formation of actin stress fibers and focal adhesions in endothelial cells that have adhered to ANGPTL4-containing ECM (in vitro). Depending on context, may modulate tumor-related angiogenesis. Its function is as follows. Mediates inactivation of the lipoprotein lipase LPL, and thereby plays an important role in the regulation of triglyceride clearance from the blood serum and in lipid metabolism. Has higher activity in LPL inactivation than the uncleaved protein. This is Angiopoietin-related protein 4 (ANGPTL4) from Bos taurus (Bovine).